Reading from the N-terminus, the 97-residue chain is Co-chaperonin GroES (97 aa).

The protein belongs to the GroES chaperonin family. As to quaternary structure, heptamer of 7 subunits arranged in a ring. Interacts with the chaperonin GroEL.

Its subcellular location is the cytoplasm. Its function is as follows. Together with the chaperonin GroEL, plays an essential role in assisting protein folding. The GroEL-GroES system forms a nano-cage that allows encapsulation of the non-native substrate proteins and provides a physical environment optimized to promote and accelerate protein folding. GroES binds to the apical surface of the GroEL ring, thereby capping the opening of the GroEL channel. This chain is Co-chaperonin GroES, found in Bifidobacterium longum (strain NCC 2705).